We begin with the raw amino-acid sequence, 397 residues long: P2X purinoceptor 3 (397 aa).

The Cytoplasmic portion of the chain corresponds to 1 to 20 (MNCISDFFTYETTKSVVVKS). A helical transmembrane segment spans residues 21–43 (WTIGIINRAVQLLIISYFVGWVF). Residues 44–322 (LHEKAYQVRD…AGKFNIIPTI (279 aa)) lie on the Extracellular side of the membrane. ATP contacts are provided by Lys-63 and Lys-65. Disulfide bonds link Cys-107–Cys-153, Cys-116–Cys-137, and Cys-122–Cys-147. Glu-111 is a binding site for Mg(2+). Asn-139 carries an N-linked (GlcNAc...) asparagine glycan. Position 158 (Asp-158) interacts with Mg(2+). Ca(2+) is bound at residue Asp-158. N-linked (GlcNAc...) asparagine glycosylation occurs at Asn-170. Residue Thr-172 participates in ATP binding. N-linked (GlcNAc...) asparagine glycosylation is present at Asn-194. 2 cysteine pairs are disulfide-bonded: Cys-203–Cys-213 and Cys-247–Cys-256. Ser-275, Asn-279, and Arg-281 together coordinate ATP. Residue Asn-290 is glycosylated (N-linked (GlcNAc...) asparagine). Lys-299 contacts ATP. A helical membrane pass occupies residues 323-341 (ISSVAAFTSVGVGTVLCDI). Residues 342 to 397 (ILLNFLKGADHYKARKFEEVTETTLKGTASTNPVFTSDQATVEKQSTDSGAYSIGH) lie on the Cytoplasmic side of the membrane.

The protein belongs to the P2X receptor family. In terms of assembly, homotrimer. Forms heterotrimer with P2RX2. Heterotrimeric P2RX2/3 has a ligand dose-response profile that is distinct from either homotrimeric P2RX2 or P2RX3.

Its subcellular location is the cell membrane. The enzyme catalyses Ca(2+)(in) = Ca(2+)(out). It carries out the reaction Na(+)(in) = Na(+)(out). Its activity is regulated as follows. Has high sensitivity to ATP. Fast activation by external ATP. Exhibits rapid desensitization. Sensitives to the ATP agonist:alpha/beta-methylene-ATP. Subject to allosteric inhibition by AF-219. Mg(2+) and Ca(2+) slow deactivation of P2RX3. Its function is as follows. Extracellular ATP-activated non-selective cation channel. Plays particularly important role in sensory neurons where its activation is critical for gustatory, nociceptive responses, visceral reflexes and sensory hypersensitization. This is P2X purinoceptor 3 (P2rx3) from Mus musculus (Mouse).